A 200-amino-acid chain; its full sequence is Large ribosomal subunit protein uL4 (200 aa).

Residues 43 to 71 are disordered; that stretch reads RAQKTRAEVSGSGKKPWRQKGTGRARSGD.

Belongs to the universal ribosomal protein uL4 family. Part of the 50S ribosomal subunit.

Functionally, one of the primary rRNA binding proteins, this protein initially binds near the 5'-end of the 23S rRNA. It is important during the early stages of 50S assembly. It makes multiple contacts with different domains of the 23S rRNA in the assembled 50S subunit and ribosome. Its function is as follows. Forms part of the polypeptide exit tunnel. The polypeptide is Large ribosomal subunit protein uL4 (Histophilus somni (strain 2336) (Haemophilus somnus)).